The primary structure comprises 1827 residues: Sucrase-isomaltase, intestinal (1827 aa).

The Cytoplasmic portion of the chain corresponds to 2–12; that stretch reads ARKKFSGLEIS. At S7 the chain carries Phosphoserine; by PKA. Residues 13–32 form a helical; Signal-anchor for type II membrane protein membrane-spanning segment; sequence LIVLFVIVTIIAIALIVVLA. The Lumenal segment spans residues 33-1827; that stretch reads TKTPAVDEIS…LEEPIEINWS (1795 aa). Residues 40–61 are disordered; it reads EISDSTSTPATTRVTTNPSDSG. Residues 45–55 show a composition bias toward low complexity; sequence TSTPATTRVTT. The P-type 1 domain maps to 61-110; that stretch reads GKCPNVLNDPVNVRINCIPEQFPTEGICAQRGCCWRPWNDSLIPWCFFVD. Disulfide bonds link C63/C94, C77/C93, and C88/C106. A glycan (N-linked (GlcNAc...) asparagine) is linked at N99. An isomaltase region spans residues 110-1007; the sequence is DNHGYNVQDM…DLQLNTANAR (898 aa). Residues Y237 and Y239 each carry the sulfotyrosine modification. Residues D264 and D388 each contribute to the substrate site. A sulfotyrosine mark is found at Y391 and Y400. N-linked (GlcNAc...) asparagine glycosylation is found at N437 and N455. D505 acts as the Nucleophile; for isomaltase activity in catalysis. C520 and C545 are disulfide-bonded. Position 588 (R588) interacts with substrate. D604 acts as the For isomaltase activity in catalysis. Residues C635 and C646 are joined by a disulfide bond. Residue H662 participates in substrate binding. Sulfotyrosine is present on residues Y667, Y763, and Y765. N-linked (GlcNAc...) asparagine glycans are attached at residues N823, N855, N904, and N926. The region spanning 932–978 is the P-type 2 domain; sequence NQIFSENERFNCYPDADLATEQKCTQRGCVWRTGSSLSKAPECYFPR. Residues 1008-1827 are sucrase; the sequence is IKLPSDPIST…LEEPIEINWS (820 aa). N-linked (GlcNAc...) asparagine glycans are attached at residues N1235, N1303, N1340, and N1354. D1394 (nucleophile; for sucrase activity) is an active-site residue. E1397 acts as the For sucrase activity in catalysis. The N-linked (GlcNAc...) asparagine glycan is linked to N1403. Catalysis depends on D1500, which acts as the Proton donor; for isomaltase activity. N-linked (GlcNAc...) asparagine glycosylation is found at N1535, N1572, N1675, N1748, N1763, and N1815.

It belongs to the glycosyl hydrolase 31 family. In terms of assembly, the resulting sucrase and isomaltase subunits stay associated with one another in a complex by non-covalent linkages. Post-translationally, the precursor is proteolytically cleaved when exposed to pancreatic proteases in the intestinal lumen. Sulfated. Expressed in the poorly differentiated crypt cells of the small intestine as well as in the mature villous cells. Expressed at very low levels in the colon.

Its subcellular location is the apical cell membrane. It catalyses the reaction Hydrolysis of sucrose and maltose by an alpha-D-glucosidase-type action.. The enzyme catalyses Hydrolysis of (1-&gt;6)-alpha-D-glucosidic linkages in some oligosaccharides produced from starch and glycogen by alpha-amylase, and in isomaltose.. Functionally, plays an important role in the final stage of carbohydrate digestion. Isomaltase activity is specific for both alpha-1,4- and alpha-1,6-oligosaccharides. The polypeptide is Sucrase-isomaltase, intestinal (SI) (Homo sapiens (Human)).